A 257-amino-acid chain; its full sequence is Acyl-[acyl-carrier-protein]--UDP-N-acetylglucosamine O-acyltransferase (257 aa).

This sequence belongs to the transferase hexapeptide repeat family. LpxA subfamily. As to quaternary structure, homotrimer.

Its subcellular location is the cytoplasm. The catalysed reaction is a (3R)-hydroxyacyl-[ACP] + UDP-N-acetyl-alpha-D-glucosamine = a UDP-3-O-[(3R)-3-hydroxyacyl]-N-acetyl-alpha-D-glucosamine + holo-[ACP]. It participates in glycolipid biosynthesis; lipid IV(A) biosynthesis; lipid IV(A) from (3R)-3-hydroxytetradecanoyl-[acyl-carrier-protein] and UDP-N-acetyl-alpha-D-glucosamine: step 1/6. In terms of biological role, involved in the biosynthesis of lipid A, a phosphorylated glycolipid that anchors the lipopolysaccharide to the outer membrane of the cell. The polypeptide is Acyl-[acyl-carrier-protein]--UDP-N-acetylglucosamine O-acyltransferase (Anaeromyxobacter dehalogenans (strain 2CP-1 / ATCC BAA-258)).